A 503-amino-acid polypeptide reads, in one-letter code: Probable cytosol aminopeptidase (503 aa).

K274 and D279 together coordinate Mn(2+). K286 is an active-site residue. Residues D297, D356, and E358 each coordinate Mn(2+). Residue R360 is part of the active site.

This sequence belongs to the peptidase M17 family. Mn(2+) serves as cofactor.

Its subcellular location is the cytoplasm. The catalysed reaction is Release of an N-terminal amino acid, Xaa-|-Yaa-, in which Xaa is preferably Leu, but may be other amino acids including Pro although not Arg or Lys, and Yaa may be Pro. Amino acid amides and methyl esters are also readily hydrolyzed, but rates on arylamides are exceedingly low.. The enzyme catalyses Release of an N-terminal amino acid, preferentially leucine, but not glutamic or aspartic acids.. Functionally, presumably involved in the processing and regular turnover of intracellular proteins. Catalyzes the removal of unsubstituted N-terminal amino acids from various peptides. The polypeptide is Probable cytosol aminopeptidase (Burkholderia orbicola (strain MC0-3)).